Here is a 282-residue protein sequence, read N- to C-terminus: E3 ubiquitin-protein ligase RNF217 (282 aa).

Residues 1–218 (MSCRVCLEDR…LSIFGCKYRY (218 aa)) form a TRIAD supradomain region. Zn(2+) contacts are provided by Cys-3, Cys-6, Cys-23, Cys-26, Cys-123, Cys-126, His-131, Cys-136, Cys-163, and Cys-166. An RING-type 1 zinc finger spans residues 3–49 (CRVCLEDRSIKPLPCCKKPVCDECLKRYLSSQVQLGQAEIQCPITEC). Residues 68–136 (IKYKYFLELS…HAPWHEGVNC (69 aa)) form an IBR-type zinc finger. An RING-type 2; atypical zinc finger spans residues 163-192 (CPRCKVHIQRTEGCDHMTCSQCNTNFCYRC). The active site involves Cys-176. Zn(2+) contacts are provided by Cys-181, Cys-184, Cys-189, Cys-192, His-205, and Cys-214. The helical transmembrane segment at 243 to 263 (LLIVLGLVLGALAVVIGLFGL) threads the bilayer.

It belongs to the RBR family. RNF217 subfamily.

The protein resides in the cytoplasm. It is found in the membrane. The catalysed reaction is [E2 ubiquitin-conjugating enzyme]-S-ubiquitinyl-L-cysteine + [acceptor protein]-L-lysine = [E2 ubiquitin-conjugating enzyme]-L-cysteine + [acceptor protein]-N(6)-ubiquitinyl-L-lysine.. Its pathway is protein modification; protein ubiquitination. E3 ubiquitin-protein ligase which accepts ubiquitin from E2 ubiquitin-conjugating enzymes in the form of a thioester and then directly transfers the ubiquitin to targeted substrates. Mediates the degradation of the iron exporter ferroportin/SLC40A1 and thus regulates iron homeostasis. This is E3 ubiquitin-protein ligase RNF217 (rnf217) from Xenopus laevis (African clawed frog).